Reading from the N-terminus, the 582-residue chain is Peptidyl-prolyl cis-trans isomerase FKBP10 (582 aa).

The signal sequence occupies residues 1-26 (MFPAGPPSHSLLRLPLLQLLLLVVQA). 3 PPIase FKBP-type domains span residues 62–150 (GDFV…LDVW), 174–262 (GDFV…IDVH), and 286–374 (GDFM…IDFH). Residues N70, N182, N294, N310, N352, N393, and N407 are each glycosylated (N-linked (GlcNAc...) asparagine). In terms of domain architecture, PPIase FKBP-type 4 spans 399–486 (GDFVRYHYNC…LFEVELVSRE (88 aa)). EF-hand domains follow at residues 497 to 532 (WHKD…QVSE) and 542 to 577 (DPEK…DEER). Residues D510, N512, D514, E516, E521, D555, N557, D559, K561, and E566 each coordinate Ca(2+). Residues 533-582 (GKGRLMPGQDPEKTIGDMFQNQDRNQDGKITVDELKLKSDEDEERVHEEL) are disordered. Residues 556-582 (RNQDGKITVDELKLKSDEDEERVHEEL) are compositionally biased toward basic and acidic residues. Positions 579–582 (HEEL) match the Prevents secretion from ER motif.

In terms of processing, glycosylated and phosphorylated.

It is found in the endoplasmic reticulum lumen. It carries out the reaction [protein]-peptidylproline (omega=180) = [protein]-peptidylproline (omega=0). With respect to regulation, inhibited by both FK506 and rapamycin, but not by cyclosporin A. Its function is as follows. PPIases accelerate the folding of proteins during protein synthesis. This is Peptidyl-prolyl cis-trans isomerase FKBP10 (FKBP10) from Homo sapiens (Human).